A 117-amino-acid chain; its full sequence is Large ribosomal subunit protein bL20 (117 aa).

This sequence belongs to the bacterial ribosomal protein bL20 family.

In terms of biological role, binds directly to 23S ribosomal RNA and is necessary for the in vitro assembly process of the 50S ribosomal subunit. It is not involved in the protein synthesizing functions of that subunit. This is Large ribosomal subunit protein bL20 from Acetivibrio thermocellus (strain ATCC 27405 / DSM 1237 / JCM 9322 / NBRC 103400 / NCIMB 10682 / NRRL B-4536 / VPI 7372) (Clostridium thermocellum).